A 389-amino-acid chain; its full sequence is D-alanine--D-alanine ligase (389 aa).

Residues 1 to 12 are compositionally biased toward polar residues; the sequence is MSTENLPQNPEQ. A disordered region spans residues 1 to 22; that stretch reads MSTENLPQNPEQSPRRPPRKPR. One can recognise an ATP-grasp domain in the interval 169 to 379; the sequence is KAVFTSYGLK…YPELVDRLVQ (211 aa). 205-260 serves as a coordination point for ATP; sequence AGEHGWPLFVKPARAGSSIGITKVDDLAGLDEAIEEARRHDPKILVEAALRGREIE. 3 residues coordinate Mg(2+): D333, E346, and N348.

This sequence belongs to the D-alanine--D-alanine ligase family. Requires Mg(2+) as cofactor. Mn(2+) is required as a cofactor.

It localises to the cytoplasm. The enzyme catalyses 2 D-alanine + ATP = D-alanyl-D-alanine + ADP + phosphate + H(+). It functions in the pathway cell wall biogenesis; peptidoglycan biosynthesis. In terms of biological role, cell wall formation. The chain is D-alanine--D-alanine ligase (ddl) from Streptomyces coelicolor (strain ATCC BAA-471 / A3(2) / M145).